We begin with the raw amino-acid sequence, 1248 residues long: Reverse gyrase 1 (1248 aa).

The RG N-terminal-type zinc-finger motif lies at 7-44; sequence IPPSIYLFSCPNCGRSISTYRLLLGSVCNICLEEDKEY. 4 residues coordinate Zn(2+): Cys16, Cys19, Cys34, and Cys37. Residues Gln92 and 109 to 116 each bind ATP; that span reads APPGLGKT. The Helicase ATP-binding domain maps to 96 to 262; it reads IYRLLSGESF…KKYRENTQKN (167 aa). The short motif at 219–222 is the DEAD box element; that stretch reads DDVD. Residues 621 to 1248 are topoisomerase I; that stretch reads QKVKTVLLVV…QVYEEINEIR (628 aa). In terms of domain architecture, Toprim spans 625-789; sequence TVLLVVESPN…NIRRAEFHEV (165 aa). A Mg(2+)-binding site is contributed by Glu631. The segment at 706–735 adopts an RG C-terminal-type; atypical zinc-finger fold; the sequence is IKKCENNHQFTDFFESNKCPRCMTTKVRYD. Zn(2+) is bound by residues Cys709, His713, Cys724, and Cys727. Asp758 contributes to the Mg(2+) binding site. Positions 805–1248 constitute a Topo IA-type catalytic domain; sequence NVNLVKSQLV…QVYEEINEIR (444 aa). Tyr965 serves as the catalytic O-(5'-phospho-DNA)-tyrosine intermediate.

It in the N-terminal section; belongs to the DEAD box helicase family. DDVD subfamily. This sequence in the C-terminal section; belongs to the type IA topoisomerase family. In terms of assembly, monomer. Requires Zn(2+) as cofactor. The cofactor is Mg(2+). The N-terminus is blocked.

Its subcellular location is the cytoplasm. It catalyses the reaction ATP + H2O = ADP + phosphate + H(+). Modifies the topological state of DNA by introducing positive supercoils in an ATP-dependent process. Increases the linking number in steps of +1. Has a DNA-stimulated ATPase activity; closed circular ssDNA stimulates ATPase much better than dsDNA although negative supercoiled, positive supercoiled and relaxed dsDNA all stimulate ATPase activity. All NTPs permit topoisomerization (relaxation) of negatively supercoiled dsDNA without nucleotide hydrolysis. It transiently cleaves a single DNA strand and remains covalently bound to the 5' DNA end. Acts via a tyrosine residue. Reverse gyrase binds and unwinds DNA independently of ATP binding and DNA cleavage. May be involved in rewinding the DNA strands in the regions of the chromosome that have opened up to allow transcription or replication, probably acts via ssDNA regions of the chromosome. This chain is Reverse gyrase 1, found in Sulfolobus acidocaldarius (strain ATCC 33909 / DSM 639 / JCM 8929 / NBRC 15157 / NCIMB 11770).